The following is a 491-amino-acid chain: Myocilin (491 aa).

Positions 1 to 18 (MPAVQLLLLACPVWDVGA) are cleaved as a signal peptide. Asparagine 43 carries an N-linked (GlcNAc...) asparagine glycan. Positions 98 to 171 (QETPEGLQRE…QEVARLRRGQ (74 aa)) form a coiled coil. The segment at 151 to 189 (ENLARRLESSSQEVARLRRGQCPQTRDTARDVPPGSREV) is disordered. Positions 231-490 (GCGELVWVGE…MVTYDIKLSK (260 aa)) constitute an Olfactomedin-like domain. A disulfide bridge connects residues cysteine 232 and cysteine 420. 5 residues coordinate Ca(2+): aspartate 367, asparagine 415, alanine 416, isoleucine 464, and aspartate 465.

Homodimer (via N-terminus). Can also form higher oligomers. Interacts with OLFM3, FN1, NRCAM, GLDN and NFASC. Interacts (via N-terminus) with MYL2. Interacts with SFRP1, FRZB, FZD7, FZD10, FZD1 and WIF1; regulates Wnt signaling. Interacts with SNTA1; regulates muscle hypertrophy. Interacts with ERBB2 and ERBB3; activates ERBB2-ERBB3 signaling pathway. Interacts with SNCG; affects its secretion and its aggregation. Palmitoylated. In terms of processing, undergoes a calcium-dependent proteolytic cleavage at Arg-213 by CAPN2 in the endoplasmic reticulum. The result is the production of two fragments, one of 35 kDa containing the C-terminal olfactomedin-like domain, and another of 20 kDa containing the N-terminal leucine zipper-like domain. Post-translationally, glycosylated.

It is found in the secreted. Its subcellular location is the golgi apparatus. The protein localises to the cytoplasmic vesicle. It localises to the extracellular space. The protein resides in the extracellular matrix. It is found in the extracellular exosome. Its subcellular location is the mitochondrion. The protein localises to the mitochondrion intermembrane space. It localises to the mitochondrion inner membrane. The protein resides in the mitochondrion outer membrane. It is found in the rough endoplasmic reticulum. Its subcellular location is the cell projection. The protein localises to the cilium. It localises to the endoplasmic reticulum. Its function is as follows. Secreted glycoprotein regulating the activation of different signaling pathways in adjacent cells to control different processes including cell adhesion, cell-matrix adhesion, cytoskeleton organization and cell migration. Promotes substrate adhesion, spreading and formation of focal contacts. Negatively regulates cell-matrix adhesion and stress fiber assembly through Rho protein signal transduction. Modulates the organization of actin cytoskeleton by stimulating the formation of stress fibers through interactions with components of Wnt signaling pathways. Promotes cell migration through activation of PTK2 and the downstream phosphatidylinositol 3-kinase signaling. Plays a role in bone formation and promotes osteoblast differentiation in a dose-dependent manner through mitogen-activated protein kinase signaling. Mediates myelination in the peripheral nervous system through ERBB2/ERBB3 signaling. Plays a role as a regulator of muscle hypertrophy through the components of dystrophin-associated protein complex. Involved in positive regulation of mitochondrial depolarization. Plays a role in neurite outgrowth. May participate in the obstruction of fluid outflow in the trabecular meshwork. This is Myocilin (MYOC) from Macaca fascicularis (Crab-eating macaque).